The following is a 445-amino-acid chain: 3-phosphoshikimate 1-carboxyvinyltransferase (445 aa).

The tract at residues 1–20 (MSTSAAPTPLESRASGPLSG) is disordered. 3-phosphoshikimate-binding residues include lysine 28, serine 29, and arginine 33. Lysine 28 provides a ligand contact to phosphoenolpyruvate. Phosphoenolpyruvate contacts are provided by glycine 101 and arginine 129. Residues serine 175, glutamine 177, aspartate 328, and lysine 355 each contribute to the 3-phosphoshikimate site. Residue glutamine 177 participates in phosphoenolpyruvate binding. The active-site Proton acceptor is aspartate 328. 2 residues coordinate phosphoenolpyruvate: arginine 359 and arginine 402.

Belongs to the EPSP synthase family. Monomer.

It is found in the cytoplasm. It carries out the reaction 3-phosphoshikimate + phosphoenolpyruvate = 5-O-(1-carboxyvinyl)-3-phosphoshikimate + phosphate. It participates in metabolic intermediate biosynthesis; chorismate biosynthesis; chorismate from D-erythrose 4-phosphate and phosphoenolpyruvate: step 6/7. Its function is as follows. Catalyzes the transfer of the enolpyruvyl moiety of phosphoenolpyruvate (PEP) to the 5-hydroxyl of shikimate-3-phosphate (S3P) to produce enolpyruvyl shikimate-3-phosphate and inorganic phosphate. This Bradyrhizobium sp. (strain ORS 278) protein is 3-phosphoshikimate 1-carboxyvinyltransferase.